Reading from the N-terminus, the 378-residue chain is UPF0725 protein At1g23970 (378 aa).

This sequence belongs to the UPF0725 (EMB2204) family.

This is UPF0725 protein At1g23970 from Arabidopsis thaliana (Mouse-ear cress).